Reading from the N-terminus, the 400-residue chain is Lysophospholipid transporter LplT (400 aa).

Helical transmembrane passes span V19–A39, V53–A73, A91–I111, L139–A159, I164–I184, L227–L247, Y257–V277, T281–L301, A304–V324, N352–A372, and V373–W393.

Belongs to the major facilitator superfamily. LplT (TC 2.A.1.42) family.

The protein resides in the cell inner membrane. Its function is as follows. Catalyzes the facilitated diffusion of 2-acyl-glycero-3-phosphoethanolamine (2-acyl-GPE) into the cell. The polypeptide is Lysophospholipid transporter LplT (Salmonella gallinarum (strain 287/91 / NCTC 13346)).